A 248-amino-acid chain; its full sequence is Prepilin leader peptidase/N-methyltransferase (248 aa).

The helical transmembrane segment at 1–21 (MLSILFIFGLILGSFYYTAGC) threads the bilayer. Zn(2+)-binding residues include cysteine 36, cysteine 39, cysteine 61, and cysteine 64. 6 consecutive transmembrane segments (helical) span residues 68–88 (ISFMYPAAELVTACLFAAAGI), 90–110 (FGISLELFPAVVFISLLIIVA), 114–134 (IHFMLIPNRILIFFLPFLAAA), 143–163 (WYAGLLGAAAGFLFLAVIAAI), 178–198 (VIGFVLGVKMLAAAFFFSVLI), and 223–243 (AIAAGSILAYLYGDSIISFYI).

The protein belongs to the peptidase A24 family. Requires Zn(2+) as cofactor.

It is found in the cell membrane. It carries out the reaction Typically cleaves a -Gly-|-Phe- bond to release an N-terminal, basic peptide of 5-8 residues from type IV prepilin, and then N-methylates the new N-terminal amino group, the methyl donor being S-adenosyl-L-methionine.. Its function is as follows. Plays a role in type II pseudopili formation by proteolytically removing the leader sequence from substrate proteins and subsequently monomethylating the alpha-amino group of the newly exposed N-terminal phenylalanine. Substrates include proteins required for biogenesis of the type II general secretory apparatus. The sequence is that of Prepilin leader peptidase/N-methyltransferase (comC) from Bacillus subtilis (strain 168).